The primary structure comprises 314 residues: Ribosomal RNA small subunit methyltransferase H (314 aa).

S-adenosyl-L-methionine contacts are provided by residues 35-37 (GGH), Asp-54, Phe-83, Asp-104, and Gln-111.

This sequence belongs to the methyltransferase superfamily. RsmH family.

It localises to the cytoplasm. The enzyme catalyses cytidine(1402) in 16S rRNA + S-adenosyl-L-methionine = N(4)-methylcytidine(1402) in 16S rRNA + S-adenosyl-L-homocysteine + H(+). Its function is as follows. Specifically methylates the N4 position of cytidine in position 1402 (C1402) of 16S rRNA. This chain is Ribosomal RNA small subunit methyltransferase H, found in Oenococcus oeni (strain ATCC BAA-331 / PSU-1).